Reading from the N-terminus, the 262-residue chain is MAIHLVIIDALNLIRRVHSAQPNQDDIQAVITTTTRTINKILKETEPTHIIAVFDHHLQDRGWRAEILPQYKEDRKPMPEALQKGMDDIQEAWWKLGIDSLLSDGDEADDLVATLANKVAVHNEQVTIISTDKGYCQLLSPTLRIRDYFQHRWLDAPFVEKEFGLKPEQLADYWGLAGISSSKITGIPGVGPKAALEILTQFPTIEAANESEDLPKKYRKKFDEHYETAILCRQVAGLRTDIELGFNLQDIRYEKGTRDYQV.

Mg(2+) is bound at residue D109. A 5'-3' exonuclease domain is found at 165–255 (LKPEQLADYW…FNLQDIRYEK (91 aa)). K(+)-binding residues include L176, A177, I187, and V190. The segment at 189–194 (GVGPKA) is interaction with DNA.

Belongs to the Xni family. It depends on Mg(2+) as a cofactor. Requires K(+) as cofactor.

In terms of biological role, has flap endonuclease activity. During DNA replication, flap endonucleases cleave the 5'-overhanging flap structure that is generated by displacement synthesis when DNA polymerase encounters the 5'-end of a downstream Okazaki fragment. This chain is Flap endonuclease Xni, found in Aliivibrio fischeri (strain MJ11) (Vibrio fischeri).